A 110-amino-acid chain; its full sequence is Large ribosomal subunit protein uL22 (110 aa).

This sequence belongs to the universal ribosomal protein uL22 family. In terms of assembly, part of the 50S ribosomal subunit.

Functionally, this protein binds specifically to 23S rRNA; its binding is stimulated by other ribosomal proteins, e.g. L4, L17, and L20. It is important during the early stages of 50S assembly. It makes multiple contacts with different domains of the 23S rRNA in the assembled 50S subunit and ribosome. The globular domain of the protein is located near the polypeptide exit tunnel on the outside of the subunit, while an extended beta-hairpin is found that lines the wall of the exit tunnel in the center of the 70S ribosome. The protein is Large ribosomal subunit protein uL22 of Mycoplasmopsis pulmonis (strain UAB CTIP) (Mycoplasma pulmonis).